A 277-amino-acid chain; its full sequence is Cell wall protein PGA30 (277 aa).

An N-terminal signal peptide occupies residues 1–18 (MKYFTIATVLTLASSALA). N129 and N178 each carry an N-linked (GlcNAc...) asparagine glycan. Residues 219-246 (VLPSSSTEAPPKTSVAAPSTTAEAQTTA) are disordered. The segment covering 234–246 (AAPSTTAEAQTTA) has biased composition (polar residues). A lipid anchor (GPI-anchor amidated glycine) is attached at G253. A propeptide spans 254 to 277 (GANEIVGGGSMAIALAAAAIGLVI) (removed in mature form).

Belongs to the SRP1/TIP1 family. Post-translationally, the GPI-anchor is attached to the protein in the endoplasmic reticulum and serves to target the protein to the cell surface. There, the glucosamine-inositol phospholipid moiety is cleaved off and the GPI-modified mannoprotein is covalently attached via its lipidless GPI glycan remnant to the 1,6-beta-glucan of the outer cell wall layer.

It is found in the secreted. It localises to the cell wall. The protein resides in the membrane. Component of the cell wall involved in virulence which plays a role in the relationship between C.albicans and the host. The chain is Cell wall protein PGA30 (PGA30) from Candida albicans (strain SC5314 / ATCC MYA-2876) (Yeast).